We begin with the raw amino-acid sequence, 113 residues long: Cytochrome c (113 aa).

Heme c is bound by residues Cys-21, Cys-24, His-25, and Met-90.

It belongs to the cytochrome c family. Binds 1 heme c group covalently per subunit.

It is found in the mitochondrion intermembrane space. Its function is as follows. Electron carrier protein. The oxidized form of the cytochrome c heme group can accept an electron from the heme group of the cytochrome c1 subunit of cytochrome reductase. Cytochrome c then transfers this electron to the cytochrome oxidase complex, the final protein carrier in the mitochondrial electron-transport chain. This chain is Cytochrome c (cytC), found in Dictyostelium discoideum (Social amoeba).